The following is a 107-amino-acid chain: Universal stress protein B homolog (107 aa).

2 helical membrane-spanning segments follow: residues 6–23 (TILF…ARYF) and 89–106 (LFIL…SSFI).

This sequence belongs to the universal stress protein B family.

The protein resides in the cell inner membrane. This Vibrio atlanticus (strain LGP32) (Vibrio splendidus (strain Mel32)) protein is Universal stress protein B homolog.